The chain runs to 120 residues: Small ribosomal subunit protein uS17 (120 aa).

Over residues 1–22 (MMAEAKTGAKATKSAAAGAADG) the composition is skewed to low complexity. The tract at residues 1–46 (MMAEAKTGAKATKSAAAGAADGASKEKGPKHTPSPPKPSGRRKTRI) is disordered.

This sequence belongs to the universal ribosomal protein uS17 family. Part of the 30S ribosomal subunit.

In terms of biological role, one of the primary rRNA binding proteins, it binds specifically to the 5'-end of 16S ribosomal RNA. This Mycobacterium ulcerans (strain Agy99) protein is Small ribosomal subunit protein uS17.